A 112-amino-acid polypeptide reads, in one-letter code: Large ribosomal subunit protein uL18 (112 aa).

Belongs to the universal ribosomal protein uL18 family. Part of the 50S ribosomal subunit; part of the 5S rRNA/L5/L18/L25 subcomplex. Contacts the 5S and 23S rRNAs.

In terms of biological role, this is one of the proteins that bind and probably mediate the attachment of the 5S RNA into the large ribosomal subunit, where it forms part of the central protuberance. The chain is Large ribosomal subunit protein uL18 from Deinococcus deserti (strain DSM 17065 / CIP 109153 / LMG 22923 / VCD115).